Reading from the N-terminus, the 1161-residue chain is MTHGEELGSDVHQDSIVLTYLEGLLMHQAAGGSGTAINKKSAGHKEEDQNFNLSGSAFPSCQSNGPTVSTQTYQGSGMLHLKKARLLQSSEDWNAAKRKRLSDSIVNLNVKKEALLAGMVDSVPKGKQDSTLLASLLQSFSSRLQTVALSQQIRQSLKEQGYALSHESLKVEKDLRCYGVASSHLKTLLKKSKTKDQKSGPTLPDVTPNLIRDSFVESSHPAVGQSGTKVMSEPLSCAARLQAVASMVEKRASPAASPKPSVACSQLALLLSSEAHLQQYSREHALKTQNAHQVASERLAAMARLQENGQKDVGSSQLSKGVSGHLNGQARALPASKLVANKNNAATFQSPMGVVPSSPKNTSYKNSLERNNLKQAANNSLLLHLLKSQTIPTPMNGHSQNERASSFESSTPTTIDEYSDNNPSFTDDSSGDESSYSNCVPIDLSCKHRIEKPEAERPVSLENLTQSLLNTWDPKIPGVDIKEDQDTSTNSKLNSHQKVTLLQLLLGHKSEETVERNASPQDIHSDGTKFSPQNYTRTSVIESPSTNRTTPVSTPPLYTASQAESPINLSQHSLVIKWNSPPYACSTPASKLTNTAPSHLMDLTKGKESQAEKPAPSEGAQNSATFSASKLLQNLAQCGLQSSGPGEEQRPCKQLLSGNPDKPLGLIDRLNSPLLSNKTNAAEESKAFSSQPAGPEPGLPGCEIENLLERRTVLQLLLGNSSKGKNEKKEKTPARDEAPQEHSERAANEQILMVKIKSEPCDDFQTHNTNLPLNHDAKSAPFLGVTPAIHRSTAALPVSEDFKSEPASPQDFSFSKNGLLSRLLRQNQESYPADEQDKSHRNSELPTLESKNICMVPKKRKLYTEPLENPFKKMKNTAVDTANHHSGPEVLYGSLLHQEELKFSRNELDYKYPAGHSSASDGDHRSWARESKSFNVLKQLLLSENCVRDLSPHRSDSVPDTKKKGHKNNAPGSKPEFGISSLNGLMYSSPQPGSCVTDHRTFSYPGMVKTPLSPPFPEHLGCVGSRPEPGLLNGCSVPGEKGPIKWVIADMDKNEYEKDSPRLTKTNPILYYMLQKGGGNSVTTQETQDKDIWREPASAESLSQVTVKEELLPAAETKASFFNLRSPYNSHMGNNASRPHSTNGEVYGLLGNALTIKKESE.

The interaction with ZNF366 stretch occupies residues 1-416 (MTHGEELGSD…FESSTPTTID (416 aa)). Residues 21-25 (LEGLL) carry the LXXLL motif 1 motif. The tract at residues 34-68 (GTAINKKSAGHKEEDQNFNLSGSAFPSCQSNGPTV) is disordered. The span at 50–68 (NFNLSGSAFPSCQSNGPTV) shows a compositional bias: polar residues. The tract at residues 78 to 335 (MLHLKKARLL…LNGQARALPA (258 aa)) is repression domain 1. Ser104 is modified (phosphoserine). Lys111 is modified (N6-acetyllysine; alternate). Lys111 is covalently cross-linked (Glycyl lysine isopeptide (Lys-Gly) (interchain with G-Cter in SUMO2); alternate). Positions 133 to 137 (LASLL) match the LXXLL motif 2 motif. Position 158 is an N6-acetyllysine (Lys158). Residue Lys170 forms a Glycyl lysine isopeptide (Lys-Gly) (interchain with G-Cter in SUMO2) linkage. The LXXLL motif 3 signature appears at 185-189 (LKTLL). Glycyl lysine isopeptide (Lys-Gly) (interchain with G-Cter in SUMO2) cross-links involve residues Lys195 and Lys198. Thr207 is modified (phosphothreonine). Ser218 is modified (phosphoserine). Residues 267-271 (LALLL) carry the LXXLL motif 4 motif. N6-acetyllysine is present on residues Lys287 and Lys311. Ser358 carries the post-translational modification Phosphoserine. A Glycyl lysine isopeptide (Lys-Gly) (interchain with G-Cter in SUMO2) cross-link involves residue Lys374. Ser380 carries the phosphoserine modification. Positions 382–386 (LLHLL) match the LXXLL motif 5 motif. Residues 393 to 436 (TPMNGHSQNERASSFESSTPTTIDEYSDNNPSFTDDSSGDESSY) are disordered. The repression domain 2 stretch occupies residues 411 to 701 (TPTTIDEYSD…PAGPEPGLPG (291 aa)). The segment at 432-473 (DESSYSNCVPIDLSCKHRIEKPEAERPVSLENLTQSLLNTWD) is required for targeting to small nuclear foci. The CTBP-binding; principal site signature appears at 441–447 (PIDLSCK). Residues Lys447 and Lys482 each carry the N6-acetyllysine modification. At Ser488 the chain carries Phosphoserine. An LXXLL motif 6 motif is present at residues 501–505 (LLQLL). Residue Lys509 forms a Glycyl lysine isopeptide (Lys-Gly) (interchain with G-Cter in SUMO2) linkage. Polar residues predominate over residues 517-552 (NASPQDIHSDGTKFSPQNYTRTSVIESPSTNRTTPV). Residues 517-559 (NASPQDIHSDGTKFSPQNYTRTSVIESPSTNRTTPVSTPPLYT) form a disordered region. Ser519 is subject to Phosphoserine. Lys529 is subject to N6-acetyllysine. Phosphoserine occurs at positions 531, 543, and 565. Residues 566–570 (PINLS) carry the CTBP-binding motif. 3 disordered regions span residues 604–623 (TKGK…AQNS), 639–702 (GLQS…LPGC), and 717–747 (LLGN…ERAA). Lys607 is modified (N6-acetyllysine). Ser672 carries the phosphoserine modification. The short motif at 714–718 (LQLLL) is the LXXLL motif 7 element. Residues 724–747 (GKNEKKEKTPARDEAPQEHSERAA) are compositionally biased toward basic and acidic residues. Positions 736–886 (DEAPQEHSER…TAVDTANHHS (151 aa)) are repression domain 3. An interaction with ZNF366 region spans residues 754 to 1161 (VKIKSEPCDD…NALTIKKESE (408 aa)). Glycyl lysine isopeptide (Lys-Gly) (interchain with G-Cter in SUMO2) cross-links involve residues Lys757 and Lys803. A Phosphoserine modification is found at Ser808. Residues 820–824 (LSRLL) carry the LXXLL motif 8 motif. The disordered stretch occupies residues 829–848 (ESYPADEQDKSHRNSELPTL). Glycyl lysine isopeptide (Lys-Gly) (interchain with G-Cter in SUMO2) cross-links involve residues Lys851 and Lys902. Lys932 carries the post-translational modification N6-acetyllysine; alternate. A Glycyl lysine isopeptide (Lys-Gly) (interchain with G-Cter in SUMO2); alternate cross-link involves residue Lys932. The short motif at 937–941 (LKQLL) is the LXXLL motif 9 element. Residues 947–951 (VRDLS) carry the CTBP-binding motif. Basic and acidic residues predominate over residues 950 to 962 (LSPHRSDSVPDTK). The interval 950–976 (LSPHRSDSVPDTKKKGHKNNAPGSKPE) is disordered. Ser1003 carries the post-translational modification Phosphoserine. The tract at residues 1063 to 1076 (LTKTNPILYYMLQK) is ligand-dependent nuclear receptor binding. Glycyl lysine isopeptide (Lys-Gly) (interchain with G-Cter in SUMO2) cross-links involve residues Lys1108, Lys1118, and Lys1157. The interval 1121-1161 (FFNLRSPYNSHMGNNASRPHSTNGEVYGLLGNALTIKKESE) is repression domain 4.

In terms of assembly, interacts with CTBP1, CTBP2, ERS1, HDAC1, HDAC2, HDAC5, HDAC6, NR2C2, NR3C1, NR3C2, YWHAH, JUN and FOS. Found in a complex with both NR3C1 and YWHAH. Interacts with NR2C1 (sumoylated form and via the ligand-binding domain); the interaction results in promoting the repressor activity of NR2C1. Interacts with RARA and RXRB homodimers and RARA/RXRB heterodimers in the presence of ligand. Interacts with HDAC1 and HDAC3 via its N-terminal domain. Interacts with ZNF366. Interacts with RORA. Acetylation abolishes interaction with CTBP1. Phosphorylation enhances interaction with YWHAH. Acetylation regulates its nuclear translocation and corepressive activity. As to expression, expressed in the embryonic placenta. In the adult, expression is strong in the testis and brain. Also expressed at a high level in the white adipose tissue. Expressed constantly but at a weaker level in the adult heart, lung, stomach and kidney. Expressed moderately in the skeletal muscle. Expressed at a low level in the adult spleen, liver and brown adipose tissue. Expressed in the ovary at a high level in granulosa cells and at a lower level in the thecal and interstitial compartments.

It localises to the nucleus. Its function is as follows. Modulates transcriptional repression by nuclear hormone receptors such as NR2C1, thyroid hormone receptor and retinoic acid receptor/RARA. Essential for cumulus expansion and follicle rupture during ovulation. Also controls the balance between fat accumulation and energy expenditure. Positive regulator of the circadian clock gene expression: stimulates transcription of BMAL1, CLOCK and CRY1 by acting as a coactivator for RORA and RORC. Involved in the regulation of ovarian function. Plays a role in renal development. This Mus musculus (Mouse) protein is Nuclear receptor-interacting protein 1.